We begin with the raw amino-acid sequence, 191 residues long: Glucose-6-phosphate 1-dehydrogenase (191 aa).

A2 is subject to N-acetylalanine. S8 carries the phosphoserine modification. T10 is subject to Phosphothreonine. Residues 38–45 (GASGDLAK) and Y86 each bind NADP(+). D101 is a D-glucose 6-phosphate binding site. H106 serves as the catalytic Proton acceptor. R163 provides a ligand contact to NADP(+). K173 carries the N6-acetyllysine modification. NADP(+) is bound by residues Y179 and W185. A Phosphotyrosine modification is found at Y179.

Belongs to the glucose-6-phosphate dehydrogenase family. Homotetramer; dimer of dimers. Interacts with SIRT2; the interaction is enhanced by H(2)O(2) treatment. Forms a ternary complex with ALDOB and TP53; this interaction is direct. ALDOB stabilizes the complex inhibiting G6PD activity and keeping oxidative pentose phosphate metabolism in check. Post-translationally, acetylated by ELP3; acetylation inhibits its homodimerization and enzyme activity. Deacetylated by SIRT2; deacetylation stimulates its enzyme activity.

Its subcellular location is the cytoplasm. The protein resides in the cytosol. The protein localises to the membrane. The enzyme catalyses D-glucose 6-phosphate + NADP(+) = 6-phospho-D-glucono-1,5-lactone + NADPH + H(+). The protein operates within carbohydrate degradation; pentose phosphate pathway; D-ribulose 5-phosphate from D-glucose 6-phosphate (oxidative stage): step 1/3. Cytosolic glucose-6-phosphate dehydrogenase that catalyzes the first and rate-limiting step of the oxidative branch within the pentose phosphate pathway/shunt, an alternative route to glycolysis for the dissimilation of carbohydrates and a major source of reducing power and metabolic intermediates for fatty acid and nucleic acid biosynthetic processes. This chain is Glucose-6-phosphate 1-dehydrogenase (G6PD), found in Didelphis virginiana (North American opossum).